Here is a 220-residue protein sequence, read N- to C-terminus: Chalcone--flavanone isomerase B (220 aa).

The substrate site is built by Thr50, Asn115, and Thr192.

This sequence belongs to the chalcone isomerase family.

The catalysed reaction is a chalcone = a flavanone.. Its pathway is secondary metabolite biosynthesis; flavonoid biosynthesis. Catalyzes the intramolecular cyclization of bicyclic chalcones into tricyclic (S)-flavanones. Responsible for the isomerization of 4,2',4',6'-tetrahydroxychalcone (also termed chalcone) into naringenin. The sequence is that of Chalcone--flavanone isomerase B (CHI2) from Petunia hybrida (Petunia).